Here is a 253-residue protein sequence, read N- to C-terminus: Probable transcriptional regulatory protein Tery_2125 (253 aa).

Belongs to the TACO1 family.

Its subcellular location is the cytoplasm. This chain is Probable transcriptional regulatory protein Tery_2125, found in Trichodesmium erythraeum (strain IMS101).